The primary structure comprises 516 residues: Calcitonin receptor (516 aa).

The signal sequence occupies residues 1 to 24 (MRFLLLNRFTLLLLLLVSPTPVLQ). The Extracellular portion of the chain corresponds to 25–146 (APTNLTDSGL…FTPDKLHNAY (122 aa)). 4 N-linked (GlcNAc...) asparagine glycosylation sites follow: Asn-28, Asn-73, Asn-125, and Asn-130. Disulfide bonds link Cys-55-Cys-81, Cys-72-Cys-112, and Cys-95-Cys-134. Residues 147-169 (VLYYLALVGHSMSIAALIASMGI) traverse the membrane as a helical segment. The Cytoplasmic segment spans residues 170-181 (FLFFKNLSCQRV). The helical transmembrane segment at 182 to 202 (TLHKNMFLTYILNSIIIIIHL) threads the bilayer. Over 203–256 (VEVVPNGDLVRRDPMHIFHHNTYMWTMQWELSPPLPLSAHEGKMDPHDSEVISC) the chain is Extracellular. A disulfide bond links Cys-256 and Cys-326. A helical membrane pass occupies residues 257–279 (KILHFFHQYMMACNYFWMLCEGI). Residues 280 to 296 (YLHTLIVMAVFTEDQRL) are Cytoplasmic-facing. Residues 297 to 317 (RWYYLLGWGFPIVPTIIHAIT) traverse the membrane as a helical segment. Over 318–333 (RAVYYNDNCWLSTETH) the chain is Extracellular. Residues 334-357 (LLYIIHGPVMAALVVNFFFLLNIV) traverse the membrane as a helical segment. Residues 358 to 377 (RVLVTKMRQTHEAEAYMYLK) are Cytoplasmic-facing. A helical transmembrane segment spans residues 378–396 (AVKATMVLVPLLGIQFVVF). Residues 397–404 (PWRPSNKV) are Extracellular-facing. Residues 405 to 431 (LGKIYDYLMHSLIHFQGFFVATIYCFC) traverse the membrane as a helical segment. Topologically, residues 432-516 (NHEVQVTLKR…MNVIQQDSSA (85 aa)) are cytoplasmic. The tract at residues 489 to 516 (RNPPVSNNEGEEGTEMIPMNVIQQDSSA) is disordered.

Belongs to the G-protein coupled receptor 2 family. Heterodimer of CALCR and RAMP1, RAMP2 or RAMP3; the receptor complexes function as AMYR1, AMYR2 and AMYR3 receptors, respectively, and respond to amylin/IAPP, calcitonin/CT and CGRP1 ligands. Interacts with GPRASP2.

It localises to the cell membrane. Functionally, g protein-coupled receptor activated by ligand peptides amylin (IAPP), calcitonin (CT/CALCA) and calcitonin gene-related peptide type 1 (CGRP1/CALCA). CALCR interacts with receptor-activity-modifying proteins RAMP1, 2 and 3 to form receptor complexes AMYR1, 2 and 3, respectively. IAPP, CT and CGRP1 activate CALCR and AMYRs with distinct modes of receptor activation resulting in specific phenotypes. Ligand binding causes a conformation change that triggers signaling via guanine nucleotide-binding proteins (G proteins) and modulates the activity of downstream effectors. Activates cAMP-dependent pathway. This is Calcitonin receptor from Rattus norvegicus (Rat).